The primary structure comprises 314 residues: Malate dehydrogenase (314 aa).

Residues 11–16 and Asp35 contribute to the NAD(+) site; that span reads GSGNIG. Residues Arg84 and Arg90 each coordinate substrate. NAD(+) is bound by residues Asn97 and 120–122; that span reads ITN. Residues Asn122 and Arg153 each coordinate substrate. Residue His177 is the Proton acceptor of the active site.

The protein belongs to the LDH/MDH superfamily. MDH type 3 family.

It catalyses the reaction (S)-malate + NAD(+) = oxaloacetate + NADH + H(+). Functionally, catalyzes the reversible oxidation of malate to oxaloacetate. The chain is Malate dehydrogenase from Rickettsia canadensis (strain McKiel).